The following is a 206-amino-acid chain: Small ribosomal subunit protein uS4 (206 aa).

The interval 15–46 (MGENIWGRPKSPVNKREYGPGQHGQRRKNKLS) is disordered. Positions 94-157 (RRLDAIVYRA…RQLAIVLEAT (64 aa)) constitute an S4 RNA-binding domain.

Belongs to the universal ribosomal protein uS4 family. Part of the 30S ribosomal subunit. Contacts protein S5. The interaction surface between S4 and S5 is involved in control of translational fidelity.

One of the primary rRNA binding proteins, it binds directly to 16S rRNA where it nucleates assembly of the body of the 30S subunit. Its function is as follows. With S5 and S12 plays an important role in translational accuracy. The protein is Small ribosomal subunit protein uS4 of Cereibacter sphaeroides (strain ATCC 17025 / ATH 2.4.3) (Rhodobacter sphaeroides).